Here is a 216-residue protein sequence, read N- to C-terminus: NKG2-D type II integral membrane protein (216 aa).

The Cytoplasmic segment spans residues 1-51; sequence MGWIRGRRSRHSWEMSEFHNYNLDLKKSDFSTRWQKQRCPVVKSKCRENAS. Residues 52 to 72 form a helical; Signal-anchor for type II membrane protein membrane-spanning segment; that stretch reads PFFFCCFIAVAMGIRFIIMVT. The Extracellular segment spans residues 73 to 216; it reads IWSAVFLNSL…NTYICMQRTV (144 aa). 4 disulfide bridges follow: Cys96–Cys105, Cys99–Cys110, Cys127–Cys211, and Cys189–Cys203. The C-type lectin domain maps to 98-213; that stretch reads PCPKNWICYK…STPNTYICMQ (116 aa). Asn131, Asn163, and Asn202 each carry an N-linked (GlcNAc...) asparagine glycan.

Homodimer; disulfide-linked. Heterohexamer composed of two subunits of KLRK1 and four subunits of HCST/DAP10. Interacts (via transmembrane domain) with HCST/DAP10 (via transmembrane domain); the interaction is required for KLRK1 NK cell surface and induces NK cell-mediated cytotoxicity. Does not interact with TYROBP. Interacts with CEACAM1; recruits PTPN6 that dephosphorylates VAV1. In terms of tissue distribution, expressed in natural killer (NK) cells, CD8(+) alpha-beta and gamma-delta T-cells. Expressed on essentially all CD56+CD3- NK cells from freshly isolated PBMC. Expressed in interferon-producing killer dendritic cells (IKDCs).

The protein localises to the cell membrane. In terms of biological role, functions as an activating and costimulatory receptor involved in immunosurveillance upon binding to various cellular stress-inducible ligands displayed at the surface of autologous tumor cells and virus-infected cells. Provides both stimulatory and costimulatory innate immune responses on activated killer (NK) cells, leading to cytotoxic activity. Acts as a costimulatory receptor for T-cell receptor (TCR) in CD8(+) T-cell-mediated adaptive immune responses by amplifying T-cell activation. Stimulates perforin-mediated elimination of ligand-expressing tumor cells. Signaling involves calcium influx, culminating in the expression of TNF-alpha. Participates in NK cell-mediated bone marrow graft rejection. May play a regulatory role in differentiation and survival of NK cells. Binds to ligands belonging to various subfamilies of MHC class I-related glycoproteins including MICA, MICB, RAET1E, RAET1G, RAET1L/ULBP6, ULBP1, ULBP2, ULBP3 (ULBP2&gt;ULBP1&gt;ULBP3) and ULBP4. In Homo sapiens (Human), this protein is NKG2-D type II integral membrane protein (KLRK1).